Reading from the N-terminus, the 122-residue chain is Ribosome-binding factor A (122 aa).

This sequence belongs to the RbfA family. As to quaternary structure, monomer. Binds 30S ribosomal subunits, but not 50S ribosomal subunits or 70S ribosomes.

It localises to the cytoplasm. Functionally, one of several proteins that assist in the late maturation steps of the functional core of the 30S ribosomal subunit. Associates with free 30S ribosomal subunits (but not with 30S subunits that are part of 70S ribosomes or polysomes). Required for efficient processing of 16S rRNA. May interact with the 5'-terminal helix region of 16S rRNA. In Pelagibacter ubique (strain HTCC1062), this protein is Ribosome-binding factor A.